A 361-amino-acid chain; its full sequence is Mannose-1-phosphate guanyltransferase (361 aa).

It belongs to the transferase hexapeptide repeat family.

It is found in the cytoplasm. The catalysed reaction is alpha-D-mannose 1-phosphate + GTP + H(+) = GDP-alpha-D-mannose + diphosphate. The protein operates within nucleotide-sugar biosynthesis; GDP-alpha-D-mannose biosynthesis; GDP-alpha-D-mannose from alpha-D-mannose 1-phosphate (GTP route): step 1/1. Functionally, involved in cell wall synthesis where it is required for glycosylation. Involved in cell cycle progression through cell-size checkpoint. This chain is Mannose-1-phosphate guanyltransferase (MPG1), found in Kluyveromyces lactis (strain ATCC 8585 / CBS 2359 / DSM 70799 / NBRC 1267 / NRRL Y-1140 / WM37) (Yeast).